We begin with the raw amino-acid sequence, 242 residues long: Protein Thf1 (242 aa).

Residues 178–209 (SSDKLQKDLDLYRSNLDKMQQLLTVIEDTLEA) are a coiled coil. A disordered region spans residues 212-242 (KKRASQKLEKKPEVVEEKEHKENEEQQQSSN). Over residues 217–235 (QKLEKKPEVVEEKEHKENE) the composition is skewed to basic and acidic residues.

This sequence belongs to the THF1 family.

Functionally, may be involved in photosynthetic membrane biogenesis. This is Protein Thf1 from Crocosphaera subtropica (strain ATCC 51142 / BH68) (Cyanothece sp. (strain ATCC 51142)).